The following is a 252-amino-acid chain: Flap endonuclease Xni (252 aa).

Asp-105 provides a ligand contact to Mg(2+). A 5'-3' exonuclease domain is found at 162–250 (ERTQFIDYLA…LNANLSQFRL (89 aa)). Leu-172, Ala-173, Pro-181, Val-183, and Ile-186 together coordinate K(+). The interaction with DNA stretch occupies residues 185 to 190 (GIGPKS).

It belongs to the Xni family. It depends on Mg(2+) as a cofactor. K(+) serves as cofactor.

Its function is as follows. Has flap endonuclease activity. During DNA replication, flap endonucleases cleave the 5'-overhanging flap structure that is generated by displacement synthesis when DNA polymerase encounters the 5'-end of a downstream Okazaki fragment. The sequence is that of Flap endonuclease Xni from Shewanella woodyi (strain ATCC 51908 / MS32).